The primary structure comprises 248 residues: 3-deoxy-manno-octulosonate cytidylyltransferase (248 aa).

Belongs to the KdsB family. Requires Mg(2+) as cofactor.

The protein localises to the cytoplasm. It catalyses the reaction 3-deoxy-alpha-D-manno-oct-2-ulosonate + CTP = CMP-3-deoxy-beta-D-manno-octulosonate + diphosphate. The protein operates within nucleotide-sugar biosynthesis; CMP-3-deoxy-D-manno-octulosonate biosynthesis; CMP-3-deoxy-D-manno-octulosonate from 3-deoxy-D-manno-octulosonate and CTP: step 1/1. Its pathway is bacterial outer membrane biogenesis; lipopolysaccharide biosynthesis. Activates KDO (a required 8-carbon sugar) for incorporation into bacterial lipopolysaccharide in Gram-negative bacteria. The protein is 3-deoxy-manno-octulosonate cytidylyltransferase of Escherichia coli O157:H7.